Consider the following 654-residue polypeptide: Translation factor GUF1, mitochondrial (654 aa).

The tr-type G domain occupies 57-237 (ENYRNFSIVA…SVIKNIPSPV (181 aa)). GTP-binding positions include 66 to 73 (AHVDHGKS), 130 to 134 (DTPGH), and 184 to 187 (NKID).

The protein belongs to the TRAFAC class translation factor GTPase superfamily. Classic translation factor GTPase family. LepA subfamily.

Its subcellular location is the mitochondrion inner membrane. The catalysed reaction is GTP + H2O = GDP + phosphate + H(+). Promotes mitochondrial protein synthesis. May act as a fidelity factor of the translation reaction, by catalyzing a one-codon backward translocation of tRNAs on improperly translocated ribosomes. Binds to mitochondrial ribosomes in a GTP-dependent manner. In Candida albicans (strain SC5314 / ATCC MYA-2876) (Yeast), this protein is Translation factor GUF1, mitochondrial.